Here is a 449-residue protein sequence, read N- to C-terminus: UDP-N-acetylmuramate--L-alanine ligase (449 aa).

121–127 (GAHGKSS) lines the ATP pocket.

This sequence belongs to the MurCDEF family.

The protein resides in the cytoplasm. The catalysed reaction is UDP-N-acetyl-alpha-D-muramate + L-alanine + ATP = UDP-N-acetyl-alpha-D-muramoyl-L-alanine + ADP + phosphate + H(+). It functions in the pathway cell wall biogenesis; peptidoglycan biosynthesis. Cell wall formation. This Helicobacter pylori (strain HPAG1) protein is UDP-N-acetylmuramate--L-alanine ligase.